A 417-amino-acid polypeptide reads, in one-letter code: Peptide chain release factor subunit 1 (417 aa).

This sequence belongs to the eukaryotic release factor 1 family. Heterodimer of two subunits, one of which binds GTP.

Its subcellular location is the cytoplasm. Directs the termination of nascent peptide synthesis (translation) in response to the termination codons UAA, UAG and UGA. The protein is Peptide chain release factor subunit 1 (prf1) of Thermoplasma acidophilum (strain ATCC 25905 / DSM 1728 / JCM 9062 / NBRC 15155 / AMRC-C165).